Reading from the N-terminus, the 102-residue chain is uncharacterized protein (102 aa).

Residues 1-41 are disordered; it reads MAAPRQIAFYGKGGTGKPKRKPEPVTASKEDRCLGSPSKNK.

The protein to the N-terminal of nitrogenase iron protein (NifH). Has lost the ATP-binding site.

Functionally, this protein is either not expressed, expressed at low levels or rapidly degraded. This is an uncharacterized protein from Rhizobium meliloti (Ensifer meliloti).